We begin with the raw amino-acid sequence, 426 residues long: Formate-dependent phosphoribosylglycinamide formyltransferase (426 aa).

N(1)-(5-phospho-beta-D-ribosyl)glycinamide-binding positions include 26-27 (EL) and Glu-86. ATP-binding positions include Arg-118, Lys-158, 197-200 (EEFI), and Glu-205. Residues 123–324 (EAIASTGART…EFALHAKAVL (202 aa)) form the ATP-grasp domain. Mg(2+)-binding residues include Glu-279 and Glu-293. N(1)-(5-phospho-beta-D-ribosyl)glycinamide-binding positions include Asp-300, Lys-374, and 381–382 (RR).

It belongs to the PurK/PurT family. In terms of assembly, homodimer.

The catalysed reaction is N(1)-(5-phospho-beta-D-ribosyl)glycinamide + formate + ATP = N(2)-formyl-N(1)-(5-phospho-beta-D-ribosyl)glycinamide + ADP + phosphate + H(+). The protein operates within purine metabolism; IMP biosynthesis via de novo pathway; N(2)-formyl-N(1)-(5-phospho-D-ribosyl)glycinamide from N(1)-(5-phospho-D-ribosyl)glycinamide (formate route): step 1/1. In terms of biological role, involved in the de novo purine biosynthesis. Catalyzes the transfer of formate to 5-phospho-ribosyl-glycinamide (GAR), producing 5-phospho-ribosyl-N-formylglycinamide (FGAR). Formate is provided by PurU via hydrolysis of 10-formyl-tetrahydrofolate. In Methanocella arvoryzae (strain DSM 22066 / NBRC 105507 / MRE50), this protein is Formate-dependent phosphoribosylglycinamide formyltransferase.